A 1252-amino-acid polypeptide reads, in one-letter code: Plasma membrane calcium-transporting ATPase mca-1 (1252 aa).

The Cytoplasmic segment spans residues 1-121 (MQKSQNVTAV…VRLVLDACKD (121 aa)). A helical transmembrane segment spans residues 122 to 142 (PTLVILVLSGFINLALSFYEP). At 143-180 (TSAAEDATQHLVNATTAAILANGTFMSTTEAPSEGHGT) the chain is on the extracellular side. N-linked (GlcNAc...) asparagine glycans are attached at residues N155 and N164. A helical transmembrane segment spans residues 181–201 (AWIEGVAILLCVIVVVLVTAV). Over 202 to 376 (NDYSKERQFR…KSVLQAKLSK (175 aa)) the chain is Cytoplasmic. Residues 330–361 (DDSTSTSSSSSSSSSSSGSSSNGSSDSSKSGD) form a disordered region. Low complexity predominate over residues 333–357 (TSTSSSSSSSSSSSGSSSNGSSDSS). The chain crosses the membrane as a helical span at residues 377–397 (LALQIIYCGTTIAIIALIVLV). At 398-422 (TRFCLDHYVFEKNEFSLVDIQMFVK) the chain is on the extracellular side. The chain crosses the membrane as a helical span at residues 423 to 443 (FFIIAVTILVISIPEGLPLAI). Positions 432, 435, and 437 each coordinate Ca(2+). The Cytoplasmic segment spans residues 444–879 (ALALTYSVRK…GRNVYDSISK (436 aa)). D479 acts as the 4-aspartylphosphate intermediate in catalysis. D479 and T481 together coordinate Mg(2+). ATP is bound by residues T481, E553, K612, T733, G734, D735, R792, and K798. D822 contacts Mg(2+). Residue N825 coordinates ATP. Residues 880 to 900 (FLQFQLTVNVVAVITAFVGAV) traverse the membrane as a helical segment. N888 is a binding site for Ca(2+). The Extracellular portion of the chain corresponds to 901–908 (TVSDSPLK). Residues 909-929 (AVHMLWINLIMDTLASLALAT) traverse the membrane as a helical segment. Ca(2+) is bound by residues N916 and D920. The Cytoplasmic portion of the chain corresponds to 930 to 960 (EQPTDELLERKPYGRKKSLISRTMVKNILCH). A helical membrane pass occupies residues 961–981 (ALYQLIIIFVIFFYGDTIFGI). At 982-989 (KTGLYAPL) the chain is on the extracellular side. A helical transmembrane segment spans residues 990 to 1010 (FAPPSQHFTLVFNAFVMMTVF). Topologically, residues 1011–1035 (NEINARKVHGERNVFKGLASNRVFC) are cytoplasmic. Residues 1036 to 1056 (VIWVTTFIAQIIIVQFGGAWF) form a helical membrane-spanning segment. Residues 1057 to 1065 (STAPLTLQQ) are Extracellular-facing. Residues 1066-1086 (WIVCLVLGFSTLIWGQIVATI) form a helical membrane-spanning segment. The Cytoplasmic segment spans residues 1087–1252 (PSKKLPKAWK…NVDMEDIELN (166 aa)). The interval 1124 to 1142 (LRRSGKSLWVRGMFIIGNH) is calmodulin-binding subdomain A. The interval 1143–1152 (LRVLRAFGME) is calmodulin-binding subdomain B. The disordered stretch occupies residues 1181–1252 (YRHQKHQEKK…NVDMEDIELN (72 aa)).

This sequence belongs to the cation transport ATPase (P-type) (TC 3.A.3) family. Type IIB subfamily. In terms of assembly, interacts with calmodulin.

The protein localises to the cell membrane. It carries out the reaction Ca(2+)(in) + ATP + H2O = Ca(2+)(out) + ADP + phosphate + H(+). Functionally, catalyzes the hydrolysis of ATP coupled with the transport of calcium across a membrane. This is Plasma membrane calcium-transporting ATPase mca-1 from Caenorhabditis elegans.